A 203-amino-acid chain; its full sequence is Thymidylate kinase (203 aa).

Residue 7–14 (GPDGSGKS) coordinates ATP.

It belongs to the thymidylate kinase family.

The catalysed reaction is dTMP + ATP = dTDP + ADP. Its function is as follows. Phosphorylation of dTMP to form dTDP in both de novo and salvage pathways of dTTP synthesis. The protein is Thymidylate kinase of Finegoldia magna (strain ATCC 29328 / DSM 20472 / WAL 2508) (Peptostreptococcus magnus).